The following is a 465-amino-acid chain: MLSENEIKILDFLKRRKESTSQEIAEGTGLPLSSVFSIIATLESKGIVKVISEETRKVVRLTDEGKLRTEQGLPEDRLVTLLNGRPLKIQELRNALGKDFEIGFGWARRKGLITLENDTVIPKVSQYVSPEYTALKDLQAGKEPTGEVLEILLRRKLVEVKEEKMLRVQLLREVETRPAELYVTHEMLTTGSWREYEFKPYNVEANPPFFPIGKTHYFRDFIEKVKDLMVGLGFVEVSGDFVETEFFNFDMLFQPQDHPAREIHDSFVIEGKGNLPGSDLVRKVKEVHEKWWRYSWSEDNARRLVLRSQTTAVTARVLSGAPKRIRAFTIGKVFRPDSIDATHLIEFHQMDGLVIEEDFTFRDLLSTLRDIFQGLGVKQVKFKPGYFPFTEPSVEVYGFIEGLGWVEMAGAGLLRKEVTEPAGVFSPAGAWGIGIDRLAMLFLGVKDIRDLYSLDIEYLRSRRVI.

L-phenylalanine is bound by residues T311 and F389. E391 is a binding site for Mg(2+).

Belongs to the class-II aminoacyl-tRNA synthetase family. Phe-tRNA synthetase alpha subunit type 2 subfamily. As to quaternary structure, tetramer of two alpha and two beta subunits. Mg(2+) is required as a cofactor.

The protein resides in the cytoplasm. The enzyme catalyses tRNA(Phe) + L-phenylalanine + ATP = L-phenylalanyl-tRNA(Phe) + AMP + diphosphate + H(+). The chain is Phenylalanine--tRNA ligase alpha subunit from Metallosphaera sedula (strain ATCC 51363 / DSM 5348 / JCM 9185 / NBRC 15509 / TH2).